A 378-amino-acid chain; its full sequence is Queuine tRNA-ribosyltransferase (378 aa).

Asp93 (proton acceptor) is an active-site residue. Substrate-binding positions include 93-97, Asp147, Gln189, and Gly216; that span reads DSGGF. The segment at 247–253 is RNA binding; the sequence is GVGTFRE. Residue Asp266 is the Nucleophile of the active site. The RNA binding; important for wobble base 34 recognition stretch occupies residues 271 to 275; it reads TRVAR. Zn(2+) contacts are provided by Cys308, Cys310, Cys313, and His339.

The protein belongs to the queuine tRNA-ribosyltransferase family. In terms of assembly, homodimer. Within each dimer, one monomer is responsible for RNA recognition and catalysis, while the other monomer binds to the replacement base PreQ1. It depends on Zn(2+) as a cofactor.

The enzyme catalyses 7-aminomethyl-7-carbaguanine + guanosine(34) in tRNA = 7-aminomethyl-7-carbaguanosine(34) in tRNA + guanine. Its pathway is tRNA modification; tRNA-queuosine biosynthesis. Its function is as follows. Catalyzes the base-exchange of a guanine (G) residue with the queuine precursor 7-aminomethyl-7-deazaguanine (PreQ1) at position 34 (anticodon wobble position) in tRNAs with GU(N) anticodons (tRNA-Asp, -Asn, -His and -Tyr). Catalysis occurs through a double-displacement mechanism. The nucleophile active site attacks the C1' of nucleotide 34 to detach the guanine base from the RNA, forming a covalent enzyme-RNA intermediate. The proton acceptor active site deprotonates the incoming PreQ1, allowing a nucleophilic attack on the C1' of the ribose to form the product. After dissociation, two additional enzymatic reactions on the tRNA convert PreQ1 to queuine (Q), resulting in the hypermodified nucleoside queuosine (7-(((4,5-cis-dihydroxy-2-cyclopenten-1-yl)amino)methyl)-7-deazaguanosine). In Gloeobacter violaceus (strain ATCC 29082 / PCC 7421), this protein is Queuine tRNA-ribosyltransferase.